A 251-amino-acid chain; its full sequence is Histocompatibility antigen 60b (251 aa).

The N-terminal stretch at 1-24 (MAKSSLSLNWSLLVLLNFLGATLS) is a signal peptide. The Extracellular portion of the chain corresponds to 25-212 (TGTDSLSCEL…NSDTQGLSFT (188 aa)). N63, N93, N126, and N189 each carry an N-linked (GlcNAc...) asparagine glycan. Residues 213–233 (WIVIICIGGIVSFMAFMVFAW) form a helical membrane-spanning segment. At 234–251 (CMLKKKKGALCCSSSSTT) the chain is on the cytoplasmic side.

It belongs to the NKG2D ligand family. In strain C57BL/6J, strongly expressed in cardiac muscle and skeletal muscle, with lower expression levels in spleen, liver, kidney and thymus. In strain BALB/cJ, weakly expressed in cardiac muscle, spleen, kidney and thymus.

Its subcellular location is the cell membrane. Functionally, ligand for the KLRK1 immunosurveillance receptor. Binding to KLRK1 stimulates cell lysis in vitro. This Mus musculus (Mouse) protein is Histocompatibility antigen 60b.